We begin with the raw amino-acid sequence, 569 residues long: Arginine--tRNA ligase (569 aa).

A 'HIGH' region motif is present at residues 123-133; it reads PNIAKRMHIGH.

It belongs to the class-I aminoacyl-tRNA synthetase family. As to quaternary structure, monomer.

The protein resides in the cytoplasm. It catalyses the reaction tRNA(Arg) + L-arginine + ATP = L-arginyl-tRNA(Arg) + AMP + diphosphate. In Fusobacterium nucleatum subsp. nucleatum (strain ATCC 25586 / DSM 15643 / BCRC 10681 / CIP 101130 / JCM 8532 / KCTC 2640 / LMG 13131 / VPI 4355), this protein is Arginine--tRNA ligase.